Consider the following 477-residue polypeptide: PTS system glucose-specific EIICB component (477 aa).

The PTS EIIC type-1 domain maps to 1–388 (MFKNVFANLQ…FNLDTPGREN (388 aa)). 10 consecutive transmembrane segments (helical) span residues 15–35 (SLML…IGSA), 51–71 (TGGS…ALGF), 76–96 (GVAA…LTAV), 112–132 (HLSD…AYMF), 152–172 (FVPI…SLIW), 191–211 (PILA…FGLH), 250–270 (LSGG…AIWH), 280–300 (IGSI…TEPI), 304–324 (FIIV…LSFP), and 357–377 (FPII…LFII). In terms of domain architecture, PTS EIIB type-1 spans 399–477 (NEIAPYIITA…TAMDECIKNI (79 aa)). The Phosphocysteine intermediate; for EIIB activity role is filled by Cys-421. Cys-421 carries the post-translational modification Phosphocysteine.

Its subcellular location is the cell inner membrane. It carries out the reaction N(pros)-phospho-L-histidyl-[protein] + D-glucose(out) = D-glucose 6-phosphate(in) + L-histidyl-[protein]. Its function is as follows. The phosphoenolpyruvate-dependent sugar phosphotransferase system (sugar PTS), a major carbohydrate active transport system, catalyzes the phosphorylation of incoming sugar substrates concomitantly with their translocation across the cell membrane. The enzyme II complex composed of PtsG and Crr is involved in glucose transport. This is PTS system glucose-specific EIICB component (ptsG) from Buchnera aphidicola subsp. Acyrthosiphon pisum (strain APS) (Acyrthosiphon pisum symbiotic bacterium).